The chain runs to 1161 residues: DNA-directed RNA polymerase 132 kDa polypeptide (1161 aa).

The protein belongs to the RNA polymerase beta chain family. In terms of assembly, the DNA-dependent RNA polymerase used for intermediate and late genes expression consists of eight subunits (147) kDa, (133) kDa, (35) kDa, (30) kDa, (22) kDa, (19) kDa, (18) kDa and (7) kDa totalling more than 500 kDa in mass. The same holoenzyme, with the addition of the transcription-specificity factor RAP94, is used for early gene expression.

The protein localises to the virion. It carries out the reaction RNA(n) + a ribonucleoside 5'-triphosphate = RNA(n+1) + diphosphate. Part of the DNA-dependent RNA polymerase which catalyzes the transcription of viral DNA into RNA using the four ribonucleoside triphosphates as substrates. Responsible for the transcription of early, intermediate and late genes. DNA-dependent RNA polymerase associates with the early transcription factor (ETF), itself composed of D6 and A7, thereby allowing the early genes transcription. Late transcription, and probably also intermediate transcription, require newly synthesized RNA polymerase. This chain is DNA-directed RNA polymerase 132 kDa polypeptide (RPO132), found in Fowlpox virus (strain NVSL) (FPV).